Reading from the N-terminus, the 272-residue chain is 4-hydroxy-tetrahydrodipicolinate reductase (272 aa).

10–15 (GAAGRM) serves as a coordination point for NAD(+). Arginine 37 is a binding site for NADP(+). Residues 100 to 102 (GTT) and 124 to 127 (SGNM) each bind NAD(+). The active-site Proton donor/acceptor is histidine 157. Histidine 158 serves as a coordination point for (S)-2,3,4,5-tetrahydrodipicolinate. The active-site Proton donor is the lysine 161. 167–168 (GT) is a binding site for (S)-2,3,4,5-tetrahydrodipicolinate.

It belongs to the DapB family.

The protein localises to the cytoplasm. The enzyme catalyses (S)-2,3,4,5-tetrahydrodipicolinate + NAD(+) + H2O = (2S,4S)-4-hydroxy-2,3,4,5-tetrahydrodipicolinate + NADH + H(+). It carries out the reaction (S)-2,3,4,5-tetrahydrodipicolinate + NADP(+) + H2O = (2S,4S)-4-hydroxy-2,3,4,5-tetrahydrodipicolinate + NADPH + H(+). It functions in the pathway amino-acid biosynthesis; L-lysine biosynthesis via DAP pathway; (S)-tetrahydrodipicolinate from L-aspartate: step 4/4. Catalyzes the conversion of 4-hydroxy-tetrahydrodipicolinate (HTPA) to tetrahydrodipicolinate. The chain is 4-hydroxy-tetrahydrodipicolinate reductase from Methylocella silvestris (strain DSM 15510 / CIP 108128 / LMG 27833 / NCIMB 13906 / BL2).